The sequence spans 628 residues: Kinesin-like protein tea2 (628 aa).

Residues 2–122 (SSSSSKPVNT…TTSQQTNSKG (121 aa)) are interaction with mal3. At S82 the chain carries Phosphoserine. The Kinesin motor domain maps to 132–460 (GIITSIRIRP…LKFASRAQNL (329 aa)). ATP is bound at residue 218 to 225 (GMTGTGKT). Positions 530–557 (LRMEELLSDHNFEIADLRDELQDKEQII) form a coiled coil. Positions 588–628 (VTRGSRSSSDQFSNETKTEILPDDQQQSKKDSVTQETQLLS) are disordered. Positions 589 to 602 (TRGSRSSSDQFSNE) are enriched in polar residues. A compositionally biased stretch (basic and acidic residues) spans 603 to 620 (TKTEILPDDQQQSKKDSV).

It belongs to the TRAFAC class myosin-kinesin ATPase superfamily. Kinesin family. In terms of assembly, interacts with mal3 and tip1.

The protein resides in the cytoplasm. Its subcellular location is the cytoskeleton. Its function is as follows. Promotes microtubule growth, possibly through interactions with the microtubule end, and is important for establishing and maintaining polarized growth along the long axis of the cell. Acts as a kinesin motor protein that moves along microtubules and is required for proper localization of tea1 and tip1 to the cell tips and microtubules, respectively. ATPase activity stimulated via interaction with mal3. This Schizosaccharomyces pombe (strain 972 / ATCC 24843) (Fission yeast) protein is Kinesin-like protein tea2.